Here is a 197-residue protein sequence, read N- to C-terminus: Phospholipid hydroperoxide glutathione peroxidase (197 aa).

Position 40 is a phosphoserine (S40). U73 is a catalytic residue. U73 is a non-standard amino acid (selenocysteine).

It belongs to the glutathione peroxidase family. In terms of assembly, monomer. Has a tendency to form higher mass oligomers. Interacts with FUNDC1; this interaction promotes GPX4 recruitment into mitochondria through TOM/TIM complex where it is degraded by mitophagy. As to expression, expressed in testis. Also expressed in liver, lung, kidney and spinal cord.

Its subcellular location is the mitochondrion. It is found in the cytoplasm. It carries out the reaction a hydroperoxy polyunsaturated fatty acid + 2 glutathione = a hydroxy polyunsaturated fatty acid + glutathione disulfide + H2O. The catalysed reaction is 2 glutathione + H2O2 = glutathione disulfide + 2 H2O. The enzyme catalyses tert-butyl hydroperoxide + 2 glutathione = tert-butanol + glutathione disulfide + H2O. It catalyses the reaction cumene hydroperoxide + 2 glutathione = 2-phenylpropan-2-ol + glutathione disulfide + H2O. It carries out the reaction (9S)-hydroperoxy-(10E,12Z)-octadecadienoate + 2 glutathione = (9S)-hydroxy-(10E,12Z)-octadecadienoate + glutathione disulfide + H2O. The catalysed reaction is (13S)-hydroperoxy-(9Z,11E)-octadecadienoate + 2 glutathione = (13S)-hydroxy-(9Z,11E)-octadecadienoate + glutathione disulfide + H2O. The enzyme catalyses (5S)-hydroperoxy-(6E,8Z,11Z,14Z)-eicosatetraenoate + 2 glutathione = (5S)-hydroxy-(6E,8Z,11Z,14Z)-eicosatetraenoate + glutathione disulfide + H2O. It catalyses the reaction (12R)-hydroperoxy-(5Z,8Z,10E,14Z)-eicosatetraenoate + 2 glutathione = (12R)-hydroxy-(5Z,8Z,10E,14Z)-eicosatetraenoate + glutathione disulfide + H2O. It carries out the reaction (12S)-hydroperoxy-(5Z,8Z,10E,14Z)-eicosatetraenoate + 2 glutathione = (12S)-hydroxy-(5Z,8Z,10E,14Z)-eicosatetraenoate + glutathione disulfide + H2O. The catalysed reaction is (15S)-hydroperoxy-(5Z,8Z,11Z,13E)-eicosatetraenoate + 2 glutathione = (15S)-hydroxy-(5Z,8Z,11Z,13E)-eicosatetraenoate + glutathione disulfide + H2O. The enzyme catalyses (5S)-hydroperoxy-(6E,8Z,11Z,14Z,17Z)-eicosapentaenoate + 2 glutathione = (5S)-hydroxy-(6E,8Z,11Z,14Z,17Z)-eicosapentaenoate + glutathione disulfide + H2O. It catalyses the reaction (12S)-hydroperoxy-(5Z,8Z,10E,14Z,17Z)-eicosapentaenoate + 2 glutathione = (12S)-hydroxy-(5Z,8Z,10E,14Z,17Z)-eicosapentaenoate + glutathione disulfide + H2O. It carries out the reaction (15S)-hydroperoxy-(5Z,8Z,11Z,13E,17Z)-eicosapentaenoate + 2 glutathione = (15S)-hydroxy-(5Z,8Z,11Z,13E,17Z)-eicosapentaenoate + glutathione disulfide + H2O. The catalysed reaction is (15S)-hydroperoxy-(11Z,13E)-eicosadienoate + 2 glutathione = (15S)-hydroxy-(11Z,13E)-eicosadienoate + glutathione disulfide + H2O. The enzyme catalyses (17S)-hydroperoxy-(4Z,7Z,10Z,13Z,15E,19Z)-docosahexaenoate + 2 glutathione = (17S)-hydroxy-(4Z,7Z,10Z,13Z,15E,19Z)-docosahexaenoate + glutathione disulfide + H2O. It catalyses the reaction a hydroperoxy-1,2-diacyl-glycero-3-phosphocholine + 2 glutathione = a hydroxy-1,2-diacyl-glycero-3-phosphocholine + glutathione disulfide + H2O. Functionally, essential antioxidant peroxidase that directly reduces phospholipid hydroperoxide even if they are incorporated in membranes and lipoproteins. Can also reduce fatty acid hydroperoxide, cholesterol hydroperoxide and thymine hydroperoxide. Plays a key role in protecting cells from oxidative damage by preventing membrane lipid peroxidation. Required to prevent cells from ferroptosis, a non-apoptotic cell death resulting from an iron-dependent accumulation of lipid reactive oxygen species. The presence of selenocysteine (Sec) versus Cys at the active site is essential for life: it provides resistance to overoxidation and prevents cells against ferroptosis. The presence of Sec at the active site is also essential for the survival of a specific type of parvalbumin-positive interneurons, thereby preventing against fatal epileptic seizures. May be required to protect cells from the toxicity of ingested lipid hydroperoxides. Required for normal sperm development and male fertility. Essential for maturation and survival of photoreceptor cells. Plays a role in a primary T-cell response to viral and parasitic infection by protecting T-cells from ferroptosis and by supporting T-cell expansion. Plays a role of glutathione peroxidase in platelets in the arachidonic acid metabolism. Reduces hydroperoxy ester lipids formed by a 15-lipoxygenase that may play a role as down-regulator of the cellular 15-lipoxygenase pathway. Can also reduce small soluble hydroperoxides such as H2O2, cumene hydroperoxide and tert-butyl hydroperoxide. This chain is Phospholipid hydroperoxide glutathione peroxidase, found in Callithrix jacchus (White-tufted-ear marmoset).